We begin with the raw amino-acid sequence, 124 residues long: Small ribosomal subunit protein bS16 (124 aa).

Residues 88–124 (VPEQTKQAQPKAKAQERLREAEEKARAAAEAAASAEG) form a disordered region. The span at 100–114 (KAQERLREAEEKARA) shows a compositional bias: basic and acidic residues. Over residues 115-124 (AAEAAASAEG) the composition is skewed to low complexity.

It belongs to the bacterial ribosomal protein bS16 family.

The chain is Small ribosomal subunit protein bS16 from Rhodospirillum rubrum (strain ATCC 11170 / ATH 1.1.1 / DSM 467 / LMG 4362 / NCIMB 8255 / S1).